The following is a 327-amino-acid chain: Annexin A8 (327 aa).

Annexin repeat units follow at residues 21-92 (FNPV…ALMY), 93-164 (PPYR…CLLQ), 177-249 (GLAL…TIVK), and 253-324 (NLHC…SLVG). Ca(2+) contacts are provided by M266, G268, G270, and D310.

It belongs to the annexin family.

In terms of biological role, this protein is an anticoagulant protein that acts as an indirect inhibitor of the thromboplastin-specific complex, which is involved in the blood coagulation cascade. This Oryctolagus cuniculus (Rabbit) protein is Annexin A8 (ANXA8).